A 196-amino-acid chain; its full sequence is Holliday junction branch migration complex subunit RuvA (196 aa).

The domain I stretch occupies residues 1 to 63 (MIASVRGEVI…EDSMTLYGFA (63 aa)). The domain II stretch occupies residues 64 to 142 (DADARDLFGT…PVTTGAGVTA (79 aa)). Residues 143-151 (VGGHAVRGP) form a flexible linker region. Residues 151–196 (PVVEALVGLGFAAKQAEEACDKVLAADPDATTSSALRAALSMLGKK) form a domain III region.

This sequence belongs to the RuvA family. As to quaternary structure, homotetramer. Forms an RuvA(8)-RuvB(12)-Holliday junction (HJ) complex. HJ DNA is sandwiched between 2 RuvA tetramers; dsDNA enters through RuvA and exits via RuvB. An RuvB hexamer assembles on each DNA strand where it exits the tetramer. Each RuvB hexamer is contacted by two RuvA subunits (via domain III) on 2 adjacent RuvB subunits; this complex drives branch migration. In the full resolvosome a probable DNA-RuvA(4)-RuvB(12)-RuvC(2) complex forms which resolves the HJ.

Its subcellular location is the cytoplasm. In terms of biological role, the RuvA-RuvB-RuvC complex processes Holliday junction (HJ) DNA during genetic recombination and DNA repair, while the RuvA-RuvB complex plays an important role in the rescue of blocked DNA replication forks via replication fork reversal (RFR). RuvA specifically binds to HJ cruciform DNA, conferring on it an open structure. The RuvB hexamer acts as an ATP-dependent pump, pulling dsDNA into and through the RuvAB complex. HJ branch migration allows RuvC to scan DNA until it finds its consensus sequence, where it cleaves and resolves the cruciform DNA. The polypeptide is Holliday junction branch migration complex subunit RuvA (Mycobacterium sp. (strain JLS)).